The primary structure comprises 332 residues: Ectoine dioxygenase (332 aa).

The span at 1–10 (MSVQTSSNRP) shows a compositional bias: polar residues. Residues 1-47 (MSVQTSSNRPLPQANLHIATETPEADSRIRSAPRPGQDPYPTRLSEP) are disordered. Gln-163 contacts L-ectoine. Residue Lys-169 participates in 2-oxoglutarate binding. Fe cation is bound by residues His-180, Asp-182, and His-281.

Belongs to the PhyH family. EctD subfamily. In terms of assembly, homodimer. Fe(2+) serves as cofactor.

The enzyme catalyses L-ectoine + 2-oxoglutarate + O2 = 5-hydroxyectoine + succinate + CO2. In terms of biological role, involved in the biosynthesis of 5-hydroxyectoine, called compatible solute, which helps organisms to survive extreme osmotic stress by acting as a highly soluble organic osmolyte. Catalyzes the 2-oxoglutarate-dependent selective hydroxylation of L-ectoine to yield (4S,5S)-5-hydroxyectoine. The chain is Ectoine dioxygenase from Halomonas elongata (strain ATCC 33173 / DSM 2581 / NBRC 15536 / NCIMB 2198 / 1H9).